Here is a 489-residue protein sequence, read N- to C-terminus: Coronin-1B (489 aa).

A Phosphoserine; by PKC modification is found at serine 2. WD repeat units follow at residues 18 to 72 (QPVK…GRID), 73 to 122 (KAYP…SPLT), 123 to 166 (EPVV…GTAE), 167 to 210 (ELYR…RGTL), 211 to 256 (VAER…ENLE), and 257 to 296 (EPMALQELDSSNGALLPFYDPDTSVVYVCGKGDSSIRYFE). The tract at residues 408–444 (RRNVLSDSRPAMAPGSSHLGAPASTTTAADATPSGSL) is disordered. Over residues 428–441 (APASTTTAADATPS) the composition is skewed to low complexity. Residues 449-474 (EAGKLEEVMQELRALRALVKEQGDRI) adopt a coiled-coil conformation.

This sequence belongs to the WD repeat coronin family. Forms homooligomers, but does not form complexes with the other coronins. Interacts with Arp2/3 complex components, including ACTR2, ARPC1B and ARPC2. Binds actin. Post-translationally, phosphorylation by PKC on Ser-2 regulates the interaction with the Arp2/3 complex and cell motility in fibroblasts. Phosphorylation does not seem to affect subcellular location.

It localises to the cytoplasm. The protein resides in the cytoskeleton. It is found in the stress fiber. Functionally, regulates leading edge dynamics and cell motility in fibroblasts. May be involved in cytokinesis and signal transduction. This chain is Coronin-1B (CORO1B), found in Homo sapiens (Human).